A 552-amino-acid chain; its full sequence is Membrane protein insertase YidC (552 aa).

A helical transmembrane segment spans residues 3 to 23; sequence TKRLILFVIFSFSILMLWDSW. The tract at residues 29–65 is disordered; that stretch reads PPAASQTQTTAQSVEDGSVPQAAKSSASAANQASVPA. 4 helical membrane-spanning segments follow: residues 359–379, 429–449, 463–483, and 503–523; these read WGVA…PLSA, LPIL…LGSV, LSAV…MIIQ, and PIVF…YWLV.

It belongs to the OXA1/ALB3/YidC family. Type 1 subfamily. Interacts with the Sec translocase complex via SecD. Specifically interacts with transmembrane segments of nascent integral membrane proteins during membrane integration.

The protein resides in the cell inner membrane. Its function is as follows. Required for the insertion and/or proper folding and/or complex formation of integral membrane proteins into the membrane. Involved in integration of membrane proteins that insert both dependently and independently of the Sec translocase complex, as well as at least some lipoproteins. Aids folding of multispanning membrane proteins. This chain is Membrane protein insertase YidC, found in Methylobacillus flagellatus (strain ATCC 51484 / DSM 6875 / VKM B-1610 / KT).